Reading from the N-terminus, the 116-residue chain is Large ribosomal subunit protein bL19 (116 aa).

This sequence belongs to the bacterial ribosomal protein bL19 family.

Functionally, this protein is located at the 30S-50S ribosomal subunit interface and may play a role in the structure and function of the aminoacyl-tRNA binding site. The sequence is that of Large ribosomal subunit protein bL19 from Haemophilus influenzae (strain 86-028NP).